The chain runs to 350 residues: uncharacterized protein (350 aa).

Positions 171-334 constitute an OBG-type G domain; the sequence is PTVVIAGYPN…LKERLKKIAI (164 aa). GTP is bound by residues 177–184, 219–223, and 286–289; these read GYPNVGKS, DTPGL, and NKID.

Belongs to the TRAFAC class OBG-HflX-like GTPase superfamily. OBG GTPase family. NOG subfamily.

This is an uncharacterized protein from Methanocaldococcus jannaschii (strain ATCC 43067 / DSM 2661 / JAL-1 / JCM 10045 / NBRC 100440) (Methanococcus jannaschii).